A 428-amino-acid polypeptide reads, in one-letter code: Histidine--tRNA ligase (428 aa).

Belongs to the class-II aminoacyl-tRNA synthetase family. As to quaternary structure, homodimer.

It is found in the cytoplasm. The enzyme catalyses tRNA(His) + L-histidine + ATP = L-histidyl-tRNA(His) + AMP + diphosphate + H(+). This is Histidine--tRNA ligase from Lactobacillus delbrueckii subsp. bulgaricus (strain ATCC BAA-365 / Lb-18).